The following is a 386-amino-acid chain: Aspergillopepsin-1 (386 aa).

The first 20 residues, M1–A20, serve as a signal peptide directing secretion. Residues M21 to M69 constitute a propeptide, activation peptide. The Peptidase A1 domain occupies Y85–A383. Residue D101 is part of the active site. N-linked (GlcNAc...) asparagine glycosylation is present at N130. D275 is an active-site residue. Cysteines 311 and 346 form a disulfide.

It belongs to the peptidase A1 family. In terms of assembly, monomer.

It is found in the secreted. The catalysed reaction is Hydrolysis of proteins with broad specificity. Generally favors hydrophobic residues in P1 and P1', but also accepts Lys in P1, which leads to activation of trypsinogen. Does not clot milk.. Secreted aspartic endopeptidase that allows assimilation of proteinaceous substrates. The scissile peptide bond is attacked by a nucleophilic water molecule activated by two aspartic residues in the active site. Shows a broad primary substrate specificity. Favors hydrophobic residues at the P1 and P1' positions, but also accepts a lysine residue in the P1 position, leading to the activation of trypsinogen and chymotrypsinogen A. This is Aspergillopepsin-1 from Emericella nidulans (strain FGSC A4 / ATCC 38163 / CBS 112.46 / NRRL 194 / M139) (Aspergillus nidulans).